Consider the following 117-residue polypeptide: Acidic phospholipase A2 (117 aa).

7 disulfide bridges follow: C11–C70, C25–C116, C27–C43, C42–C98, C49–C91, C59–C84, and C77–C89. Y26, G28, and G30 together coordinate Ca(2+). H46 is an active-site residue. Residue D47 participates in Ca(2+) binding. Residue N80 is glycosylated (N-linked (GlcNAc...) asparagine). D92 is an active-site residue.

Ca(2+) is required as a cofactor. In terms of tissue distribution, expressed by the venom gland.

Its subcellular location is the secreted. The catalysed reaction is a 1,2-diacyl-sn-glycero-3-phosphocholine + H2O = a 1-acyl-sn-glycero-3-phosphocholine + a fatty acid + H(+). In terms of biological role, snake venom phospholipase A2 (PLA2) that shows strong myotoxicity and induces edema in mice. Shows no cytotoxicity in vitro. Has a strong anticoagulant effect in vitro. PLA2 catalyzes the calcium-dependent hydrolysis of the 2-acyl groups in 3-sn-phosphoglycerides. The sequence is that of Acidic phospholipase A2 from Micrurus dumerilii (Coral snake).